We begin with the raw amino-acid sequence, 93 residues long: Acyl carrier protein AcpXL (93 aa).

A Carrier domain is found at 2-88 (STTFDKVAKI…NLCAKIDALV (87 aa)). An O-(pantetheine 4'-phosphoryl)serine modification is found at Ser-37.

In terms of processing, 4'-phosphopantetheine is transferred from CoA to a specific serine of apo-ACP by AcpS. This modification is essential for activity because fatty acids are bound in thioester linkage to the sulfhydryl of the prosthetic group.

The protein resides in the cytoplasm. The protein operates within glycolipid biosynthesis; KDO(2)-lipid A biosynthesis. Functionally, carrier of the growing fatty acid chain in fatty acid biosynthesis. Is involved in the transfer of long hydroxylated fatty acids to lipid A. This is Acyl carrier protein AcpXL (acpXL) from Mesorhizobium japonicum (strain LMG 29417 / CECT 9101 / MAFF 303099) (Mesorhizobium loti (strain MAFF 303099)).